A 128-amino-acid polypeptide reads, in one-letter code: Holo-[acyl-carrier-protein] synthase (128 aa).

Mg(2+) is bound by residues Asp-8 and Glu-60.

This sequence belongs to the P-Pant transferase superfamily. AcpS family. It depends on Mg(2+) as a cofactor.

Its subcellular location is the cytoplasm. It catalyses the reaction apo-[ACP] + CoA = holo-[ACP] + adenosine 3',5'-bisphosphate + H(+). Functionally, transfers the 4'-phosphopantetheine moiety from coenzyme A to a Ser of acyl-carrier-protein. This Anaeromyxobacter dehalogenans (strain 2CP-1 / ATCC BAA-258) protein is Holo-[acyl-carrier-protein] synthase.